A 291-amino-acid chain; its full sequence is tRNA pseudouridine synthase B (291 aa).

The active-site Nucleophile is the D41.

Belongs to the pseudouridine synthase TruB family. Type 1 subfamily.

It carries out the reaction uridine(55) in tRNA = pseudouridine(55) in tRNA. Its function is as follows. Responsible for synthesis of pseudouridine from uracil-55 in the psi GC loop of transfer RNAs. The protein is tRNA pseudouridine synthase B of Parasynechococcus marenigrum (strain WH8102).